We begin with the raw amino-acid sequence, 483 residues long: FAD-linked oxidoreductase easE (483 aa).

The FAD-binding PCMH-type domain maps to 10–193 (QGRLPFYSAV…TEATVRVFSD (184 aa)).

It belongs to the oxygen-dependent FAD-linked oxidoreductase family. Requires FAD as cofactor.

It participates in alkaloid biosynthesis; ergot alkaloid biosynthesis. FAD-linked oxidoreductase; part of the gene cluster that mediates the biosynthesis of fungal ergot alkaloid. DmaW catalyzes the first step of ergot alkaloid biosynthesis by condensing dimethylallyl diphosphate (DMAP) and tryptophan to form 4-dimethylallyl-L-tryptophan. The second step is catalyzed by the methyltransferase easF that methylates 4-dimethylallyl-L-tryptophan in the presence of S-adenosyl-L-methionine, resulting in the formation of 4-dimethylallyl-L-abrine. The catalase easC and the FAD-dependent oxidoreductase easE then transform 4-dimethylallyl-L-abrine to chanoclavine-I which is further oxidized by easD in the presence of NAD(+), resulting in the formation of chanoclavine-I aldehyde. Agroclavine dehydrogenase easG then mediates the conversion of chanoclavine-I aldehyde to agroclavine via a non-enzymatic adduct reaction: the substrate is an iminium intermediate that is formed spontaneously from chanoclavine-I aldehyde in the presence of glutathione. The presence of easA is not required to complete this reaction. Further conversion of agroclavine to paspalic acid is a two-step process involving oxidation of agroclavine to elymoclavine and of elymoclavine to paspalic acid, the second step being performed by the elymoclavine oxidase cloA. Paspalic acid is then further converted to D-lysergic acid. Ergopeptines are assembled from D-lysergic acid and three different amino acids by the D-lysergyl-peptide-synthetases composed each of a monomudular and a trimodular nonribosomal peptide synthetase subunit. LpsB and lpsC encode the monomodular subunits responsible for D-lysergic acid activation and incorporation into the ergopeptine backbone. LpsA1 and A2 subunits encode the trimodular nonribosomal peptide synthetase assembling the tripeptide portion of ergopeptines. LpsA1 is responsible for formation of the major ergopeptine, ergotamine, and lpsA2 for alpha-ergocryptine, the minor ergopeptine of the total alkaloid mixture elaborated by C.purpurea. D-lysergyl-tripeptides are assembled by the nonribosomal peptide synthetases and released as N-(D-lysergyl-aminoacyl)-lactams. Cyclolization of the D-lysergyl-tripeptides is performed by the Fe(2+)/2-ketoglutarate-dependent dioxygenase easH which introduces a hydroxyl group into N-(D-lysergyl-aminoacyl)-lactam at alpha-C of the aminoacyl residue followed by spontaneous condensation with the terminal lactam carbonyl group. The chain is FAD-linked oxidoreductase easE from Claviceps purpurea (strain 20.1) (Ergot fungus).